A 1257-amino-acid polypeptide reads, in one-letter code: uncharacterized protein (1257 aa).

The interval 1–26 is disordered; the sequence is MNFSNKPNKSRKKSNRKNKKSNKSNT. Over residues 8-22 the composition is skewed to basic residues; the sequence is NKSRKKSNRKNKKSN.

The protein localises to the virion. This is an uncharacterized protein from Acanthamoeba polyphaga mimivirus (APMV).